The primary structure comprises 326 residues: Eukaryotic translation initiation factor 3 subunit I (326 aa).

WD repeat units lie at residues 8 to 47 (GHERSITQIKYNREGDLLFSCSKDQKPNVWYSLNGERLGT), 50 to 89 (GHQGAVWCLDVDWESRKLITGAGDMTAKIWDVEYGTVIAS), 145 to 184 (MTESKITSMLWGPLDETIITGHDNGNIAIWDIRKGQKVVD), 188 to 227 (DHSAGINDMQLSKDGTMFVTASKDTTAKLFDSESLMCLKT), and 285 to 326 (GHFG…NIFE).

It belongs to the eIF-3 subunit I family. In terms of assembly, component of the eukaryotic translation initiation factor 3 (eIF-3) complex. The eIF-3 complex interacts with pix.

It localises to the cytoplasm. In terms of biological role, component of the eukaryotic translation initiation factor 3 (eIF-3) complex, which is involved in protein synthesis of a specialized repertoire of mRNAs and, together with other initiation factors, stimulates binding of mRNA and methionyl-tRNAi to the 40S ribosome. The eIF-3 complex specifically targets and initiates translation of a subset of mRNAs involved in cell proliferation. The sequence is that of Eukaryotic translation initiation factor 3 subunit I from Drosophila sechellia (Fruit fly).